The chain runs to 1122 residues: Phytochrome A (1122 aa).

A compositionally biased stretch (polar residues) spans 1-11 (MSGSRPTQSSE). A disordered region spans residues 1–21 (MSGSRPTQSSEGSRRSRHSAR). The GAF domain occupies 218 to 402 (SMERLCDTMV…VFAIHVNKEV (185 aa)). Residue cysteine 323 participates in phytochromobilin binding. In terms of domain architecture, PAS 1 spans 618-688 (VTSEMVRLIE…RMLENALEGT (71 aa)). Positions 695-747 (FEIKTHLSRADAGPISLVVNACASRDLHENVVGVCFVAHDLTGQKTVMDKFTR) constitute a PAC domain. Residues 748-822 (IEGDYKAIIQ…KNQEAFVNLG (75 aa)) form the PAS 2 domain. In terms of domain architecture, Histidine kinase spans 902–1119 (YIKRQIRNPL…SFIITAELAA (218 aa)).

This sequence belongs to the phytochrome family. As to quaternary structure, homodimer. Interacts with NDPK2 and PKS4. Stabilized by interactions with PAPP5 and FYPP3 which are enhanced in the phosphorylated Pfr form. Interacts with COP1/SPA1 complex. Binds, via its photosensory domain, to PTAC12/HMR when photoactivated; this interaction stimulates its localization to photobodies. Interacts with FHY1, FHL and FHY3, especially upon far-red (FR) light illumination; when underphosphorylated. Forms PHYA/FHY1/HFR1 complex. Binds to PIF3/PAP3. Phosphorylated. In terms of processing, contains one covalently linked phytochromobilin chromophore. As to expression, expressed in fruits, flowers, leaves, stems, seedlings and roots.

It localises to the cytoplasm. The protein localises to the nucleus. The protein resides in the nucleoplasm. It is found in the nucleus speckle. In terms of biological role, regulatory photoreceptor which exists in two forms that are reversibly interconvertible by light: the Pr form that absorbs maximally in the red region of the spectrum and the Pfr form that absorbs maximally in the far-red region. Photoconversion of Pr to Pfr induces an array of morphogenetic responses, whereas reconversion of Pfr to Pr cancels the induction of those responses. Pfr controls the expression of a number of nuclear genes including those encoding the small subunit of ribulose-bisphosphate carboxylase, chlorophyll A/B binding protein, protochlorophyllide reductase, rRNA, etc. It also controls the expression of its own gene(s) in a negative feedback fashion. Involved in the flowering time regulation. Can phosphorylate FHY1 and, possibly, FHL, in red light conditions; this inactivates their co-shuttling to the nucleus. Regulates phototropic responses both in the nucleus (e.g. hypocotyl elongation and cotyledon opening under high-irradiance conditions and seed germination under very-low-fluence conditions) and in the cytoplasm (e.g. negative gravitropism in blue light and red-enhanced phototropism). Promotes seed germination, suppression of hypocotyl elongation, and randomization of hypocotyl growth orientation in far-red light; these responses to far-red light are repressed by UNE10/PIF8. Stabilizes UNE10/PIF8 but sequesters PIF3/PAP3 from its target genes promoters in far-red light. The sequence is that of Phytochrome A from Arabidopsis thaliana (Mouse-ear cress).